The following is a 453-amino-acid chain: Kynurenine 3-monooxygenase (453 aa).

Belongs to the aromatic-ring hydroxylase family. KMO subfamily. It depends on FAD as a cofactor.

It catalyses the reaction L-kynurenine + NADPH + O2 + H(+) = 3-hydroxy-L-kynurenine + NADP(+) + H2O. It functions in the pathway cofactor biosynthesis; NAD(+) biosynthesis; quinolinate from L-kynurenine: step 1/3. In terms of biological role, catalyzes the hydroxylation of L-kynurenine (L-Kyn) to form 3-hydroxy-L-kynurenine (L-3OHKyn). Required for synthesis of quinolinic acid. The chain is Kynurenine 3-monooxygenase from Salinispora tropica (strain ATCC BAA-916 / DSM 44818 / JCM 13857 / NBRC 105044 / CNB-440).